Reading from the N-terminus, the 883-residue chain is Sodium/sulfate cotransporter 2 (883 aa).

6 helical membrane passes run 3–23, 30–50, 60–80, 106–126, 139–159, and 185–205; these read FGWQ…VMAA, VTFT…VTVA, GLLT…TGGL, MCLS…PILI, LLIP…IGTS, and IFDI…FILL. RCK C-terminal domains are found at residues 211-295, 317-401, 406-491, and 497-583; these read LPGN…EFGL, VFTP…SKNN, VRAV…FPGL, and EQVD…DKSF. The next 6 helical transmembrane spans lie at 600 to 620, 624 to 644, 657 to 677, 693 to 713, 774 to 794, and 802 to 822; these read MVIG…GGLK, YIHL…TGCM, VYLT…TGVA, SDGA…ELLT, FAII…FILC, and VWIV…LYFL. A disordered region spans residues 857-883; that stretch reads QASRTGSDGTGSSDSPRALGVPKVITA. Residues 861–871 are compositionally biased toward low complexity; that stretch reads TGSDGTGSSDS.

The protein belongs to the divalent anion:Na+ symporter (DASS) superfamily. Na+/sulfate symporter (TC 2.A.47.4) family.

It is found in the cell membrane. In terms of biological role, na(+)/sulfate cotransporter with a probable high-affinity for sulfate and a proteasome dependent turnover. This Chlamydomonas reinhardtii (Chlamydomonas smithii) protein is Sodium/sulfate cotransporter 2 (SLT2).